Consider the following 434-residue polypeptide: Histidinol dehydrogenase (434 aa).

Zn(2+) contacts are provided by glutamate 260 and histidine 263. Active-site proton acceptor residues include glutamate 330 and histidine 331. Histidine 423 lines the Zn(2+) pocket.

Belongs to the histidinol dehydrogenase family. Zn(2+) serves as cofactor.

The enzyme catalyses L-histidinol + 2 NAD(+) + H2O = L-histidine + 2 NADH + 3 H(+). Its pathway is amino-acid biosynthesis; L-histidine biosynthesis; L-histidine from 5-phospho-alpha-D-ribose 1-diphosphate: step 9/9. Its function is as follows. Catalyzes the sequential NAD-dependent oxidations of L-histidinol to L-histidinaldehyde and then to L-histidine. The protein is Histidinol dehydrogenase (hisD) of Synechocystis sp. (strain ATCC 27184 / PCC 6803 / Kazusa).